A 550-amino-acid chain; its full sequence is Hydroxylamine reductase (550 aa).

Cysteine 7, cysteine 10, cysteine 19, and cysteine 25 together coordinate [4Fe-4S] cluster. Hybrid [4Fe-2O-2S] cluster contacts are provided by histidine 244, glutamate 268, cysteine 312, cysteine 405, cysteine 433, cysteine 458, glutamate 493, and lysine 495. Position 405 is a cysteine persulfide (cysteine 405).

This sequence belongs to the HCP family. [4Fe-4S] cluster is required as a cofactor. It depends on hybrid [4Fe-2O-2S] cluster as a cofactor.

The protein resides in the cytoplasm. The enzyme catalyses A + NH4(+) + H2O = hydroxylamine + AH2 + H(+). In terms of biological role, catalyzes the reduction of hydroxylamine to form NH(3) and H(2)O. This Porphyromonas gingivalis (strain ATCC BAA-308 / W83) protein is Hydroxylamine reductase.